The following is a 436-amino-acid chain: Phosphate-repressible acid phosphatase (436 aa).

The signal sequence occupies residues 1 to 20 (MKGTAASALLIALSATAAQA). N-linked (GlcNAc...) asparagine glycosylation is found at N227, N283, and N304.

Monomer.

The catalysed reaction is a phosphate monoester + H2O = an alcohol + phosphate. This is Phosphate-repressible acid phosphatase (pacA) from Aspergillus niger.